The following is a 261-amino-acid chain: NAD(P)H-quinone oxidoreductase subunit K, chloroplastic (261 aa).

[4Fe-4S] cluster-binding residues include C43, C44, C108, and C139.

This sequence belongs to the complex I 20 kDa subunit family. As to quaternary structure, NDH is composed of at least 16 different subunits, 5 of which are encoded in the nucleus. It depends on [4Fe-4S] cluster as a cofactor.

It is found in the plastid. The protein resides in the chloroplast thylakoid membrane. The enzyme catalyses a plastoquinone + NADH + (n+1) H(+)(in) = a plastoquinol + NAD(+) + n H(+)(out). The catalysed reaction is a plastoquinone + NADPH + (n+1) H(+)(in) = a plastoquinol + NADP(+) + n H(+)(out). Functionally, NDH shuttles electrons from NAD(P)H:plastoquinone, via FMN and iron-sulfur (Fe-S) centers, to quinones in the photosynthetic chain and possibly in a chloroplast respiratory chain. The immediate electron acceptor for the enzyme in this species is believed to be plastoquinone. Couples the redox reaction to proton translocation, and thus conserves the redox energy in a proton gradient. In Cycas taitungensis (Prince sago), this protein is NAD(P)H-quinone oxidoreductase subunit K, chloroplastic.